We begin with the raw amino-acid sequence, 465 residues long: Endo-1,3-1,4-beta-glycanase EglC (465 aa).

Hemolysin-type calcium-binding repeat units follow at residues 33-50, 105-122, and 123-140; these read YGTA…VDVT, FGNS…SQTI, and NGGA…ADTF. Positions 213-462 constitute a GH16 domain; that stretch reads LDRSVLTQTF…YVKAYSLDAD (250 aa). Glu-349 functions as the Nucleophile in the catalytic mechanism. The Proton donor role is filled by Glu-354.

It belongs to the glycosyl hydrolase 16 family.

Its subcellular location is the secreted. It functions in the pathway glycan metabolism; exopolysaccharide biosynthesis. Functionally, cleaves high molecular weight succinoglycan to yield LMW succinoglycan. Dynamically regulates the molecular weight distribution of succinoglycan by cleaving nascent succinoglycan only during a limited period after its synthesis, perhaps before it undergoes a time-dependent change in its conformation or aggregation state. In Rhizobium meliloti (strain 1021) (Ensifer meliloti), this protein is Endo-1,3-1,4-beta-glycanase EglC (eglC).